The sequence spans 157 residues: Baculoviral IAP repeat-containing protein 5.2-B (157 aa).

Residues 31–101 (RLRTFSNWPF…KHSPSCLFIA (71 aa)) form a BIR repeat. At Thr-47 the chain carries Phosphothreonine; by CDK1. Positions 70, 73, 90, and 97 each coordinate Zn(2+).

It belongs to the IAP family. Component of the CPC at least composed of survivin/birc5, incenp, cdca8/borealin and/or cdca9/dasra-A, and aurkb/aurora-B. Interacts directly with incenp (via N-terminus). Interacts with rxra; the interaction is stronger in the absence of 9-cis retinoic acids. Ubiquitination is required for centrosome-targeting. As to expression, exhibits strong and homogeneous expression in developing oocytes. In embryos, expressed in the animal hemisphere from one-cell to yolk plug stages, and highly expressed in the future brain and dorsal region of the neural tube at the neurula stage and early tail-bud stage. At tadpole stages, expression is restricted at a low level to the head region.

It localises to the cytoplasm. The protein localises to the nucleus. The protein resides in the chromosome. It is found in the centromere. Its subcellular location is the cytoskeleton. It localises to the spindle. Does not appear to exhibit anti-apoptotic activity. Plays a role in increasing blood vessel size during development. Component of the chromosomal passenger complex (CPC), a complex that acts as a key regulator of mitosis. The CPC complex has essential functions at the centromere in ensuring correct chromosome alignment and segregation and is required for chromatin-induced microtubule stabilization and spindle assembly. The polypeptide is Baculoviral IAP repeat-containing protein 5.2-B (birc5.2-b) (Xenopus laevis (African clawed frog)).